The following is a 449-amino-acid chain: Tubulin alpha-B chain (449 aa).

Residues Q11, E71, S140, G144, T145, T179, N206, and N228 each contribute to the GTP site. E71 is a binding site for Mg(2+). E254 is a catalytic residue.

Belongs to the tubulin family. In terms of assembly, dimer of alpha and beta chains. A typical microtubule is a hollow water-filled tube with an outer diameter of 25 nm and an inner diameter of 15 nM. Alpha-beta heterodimers associate head-to-tail to form protofilaments running lengthwise along the microtubule wall with the beta-tubulin subunit facing the microtubule plus end conferring a structural polarity. Microtubules usually have 13 protofilaments but different protofilament numbers can be found in some organisms and specialized cells. Requires Mg(2+) as cofactor.

The protein localises to the cytoplasm. It localises to the cytoskeleton. The catalysed reaction is GTP + H2O = GDP + phosphate + H(+). Its function is as follows. Tubulin is the major constituent of microtubules, a cylinder consisting of laterally associated linear protofilaments composed of alpha- and beta-tubulin heterodimers. Microtubules grow by the addition of GTP-tubulin dimers to the microtubule end, where a stabilizing cap forms. Below the cap, tubulin dimers are in GDP-bound state, owing to GTPase activity of alpha-tubulin. In Neurospora crassa (strain ATCC 24698 / 74-OR23-1A / CBS 708.71 / DSM 1257 / FGSC 987), this protein is Tubulin alpha-B chain (tba-2).